The following is a 249-amino-acid chain: 5'-nucleotidase SurE (249 aa).

A divalent metal cation contacts are provided by D8, D9, S39, and N91.

Belongs to the SurE nucleotidase family. The cofactor is a divalent metal cation.

Its subcellular location is the cytoplasm. The catalysed reaction is a ribonucleoside 5'-phosphate + H2O = a ribonucleoside + phosphate. Functionally, nucleotidase that shows phosphatase activity on nucleoside 5'-monophosphates. In Pseudomonas putida (strain ATCC 700007 / DSM 6899 / JCM 31910 / BCRC 17059 / LMG 24140 / F1), this protein is 5'-nucleotidase SurE.